Reading from the N-terminus, the 311-residue chain is Urease accessory protein UreD (311 aa).

This sequence belongs to the UreD family. In terms of assembly, ureD, UreF and UreG form a complex that acts as a GTP-hydrolysis-dependent molecular chaperone, activating the urease apoprotein by helping to assemble the nickel containing metallocenter of UreC. The UreE protein probably delivers the nickel.

It localises to the cytoplasm. Its function is as follows. Required for maturation of urease via the functional incorporation of the urease nickel metallocenter. The sequence is that of Urease accessory protein UreD from Parasynechococcus marenigrum (strain WH8102).